A 77-amino-acid chain; its full sequence is uncharacterized protein (77 aa).

This is an uncharacterized protein from Rickettsia prowazekii (strain Madrid E).